The chain runs to 155 residues: Molybdopterin synthase catalytic subunit 1 (155 aa).

Substrate contacts are provided by residues 101 to 102, Lys-117, and 124 to 126; these read HR and KKE.

It belongs to the MoaE family. MOCS2B subfamily. In terms of assembly, heterotetramer; composed of 2 small (MOCS2A) and 2 large (MOCS2B) subunits.

The protein localises to the cytoplasm. It carries out the reaction 2 [molybdopterin-synthase sulfur-carrier protein]-C-terminal-Gly-aminoethanethioate + cyclic pyranopterin phosphate + H2O = molybdopterin + 2 [molybdopterin-synthase sulfur-carrier protein]-C-terminal Gly-Gly + 2 H(+). The protein operates within cofactor biosynthesis; molybdopterin biosynthesis. Functionally, catalytic subunit of the molybdopterin synthase complex, a complex that catalyzes the conversion of precursor Z into molybdopterin. Acts by mediating the incorporation of 2 sulfur atoms from thiocarboxylated MOCS2A into precursor Z to generate a dithiolene group. The sequence is that of Molybdopterin synthase catalytic subunit 1 from Aedes aegypti (Yellowfever mosquito).